Reading from the N-terminus, the 299-residue chain is ATP phosphoribosyltransferase (299 aa).

The protein belongs to the ATP phosphoribosyltransferase family. Long subfamily. Mg(2+) serves as cofactor.

The protein localises to the cytoplasm. The enzyme catalyses 1-(5-phospho-beta-D-ribosyl)-ATP + diphosphate = 5-phospho-alpha-D-ribose 1-diphosphate + ATP. Its pathway is amino-acid biosynthesis; L-histidine biosynthesis; L-histidine from 5-phospho-alpha-D-ribose 1-diphosphate: step 1/9. Its activity is regulated as follows. Feedback inhibited by histidine. Functionally, catalyzes the condensation of ATP and 5-phosphoribose 1-diphosphate to form N'-(5'-phosphoribosyl)-ATP (PR-ATP). Has a crucial role in the pathway because the rate of histidine biosynthesis seems to be controlled primarily by regulation of HisG enzymatic activity. This chain is ATP phosphoribosyltransferase, found in Shewanella pealeana (strain ATCC 700345 / ANG-SQ1).